We begin with the raw amino-acid sequence, 329 residues long: MENMLTFACQQQRRNVRWLSSLSVLMLLAVVLSLCAGDQWIAPGDWFSARGELFVWQIRLPRTLAVLLVGAALALSGAVMQALFENPLAEPGLLGVSNGAGVGLIAAVLLGQGQLPGWALGFCAIAGALIITLILLRFARRHLSTSRLLLAGVALGIICSAMMTWAIYFSTSFDLRQLMYWMMGGFGGVDWQQAWLMIALIPVSLWICCQSQPMNILALGETSARQLGLPLWFWRNLLVVATGWMVGVSVALAGSIGFIGLVIPHILRLCGLSDHRALLPGCALAGAIALLLADVIARLALASAELPIGVVTATMGAPVFIWLLLKSRR.

9 helical membrane-spanning segments follow: residues 22 to 42, 64 to 84, 91 to 111, 115 to 135, 149 to 169, 187 to 207, 243 to 263, 277 to 297, and 305 to 325; these read LSVL…QWIA, LAVL…QALF, PGLL…VLLG, LPGW…TLIL, LLAG…AIYF, GGVD…SLWI, GWMV…GLVI, ALLP…DVIA, and ELPI…WLLL.

This sequence belongs to the binding-protein-dependent transport system permease family. FecCD subfamily. The complex is composed of two ATP-binding proteins (BtuD), two transmembrane proteins (BtuC) and a solute-binding protein (BtuF).

Its subcellular location is the cell inner membrane. Part of the ABC transporter complex BtuCDF involved in vitamin B12 import. Involved in the translocation of the substrate across the membrane. The polypeptide is Vitamin B12 import system permease protein BtuC (Citrobacter koseri (strain ATCC BAA-895 / CDC 4225-83 / SGSC4696)).